Here is a 421-residue protein sequence, read N- to C-terminus: Imidazolonepropionase (421 aa).

2 residues coordinate Fe(3+): His81 and His83. Residues His81 and His83 each coordinate Zn(2+). 4-imidazolone-5-propanoate contacts are provided by Arg90, Tyr153, and His186. Tyr153 is a binding site for N-formimidoyl-L-glutamate. His251 serves as a coordination point for Fe(3+). Position 251 (His251) interacts with Zn(2+). Glu254 serves as a coordination point for 4-imidazolone-5-propanoate. Asp326 lines the Fe(3+) pocket. Asp326 provides a ligand contact to Zn(2+). Positions 328 and 330 each coordinate N-formimidoyl-L-glutamate. Ser331 contacts 4-imidazolone-5-propanoate.

This sequence belongs to the metallo-dependent hydrolases superfamily. HutI family. It depends on Zn(2+) as a cofactor. Fe(3+) serves as cofactor.

It localises to the cytoplasm. It carries out the reaction 4-imidazolone-5-propanoate + H2O = N-formimidoyl-L-glutamate. Its pathway is amino-acid degradation; L-histidine degradation into L-glutamate; N-formimidoyl-L-glutamate from L-histidine: step 3/3. Catalyzes the hydrolytic cleavage of the carbon-nitrogen bond in imidazolone-5-propanoate to yield N-formimidoyl-L-glutamate. It is the third step in the universal histidine degradation pathway. The chain is Imidazolonepropionase from Streptococcus pyogenes serotype M28 (strain MGAS6180).